Consider the following 151-residue polypeptide: Austinoid biosynthesis clusters protein F (151 aa).

This sequence belongs to the trt14 isomerase family. As to quaternary structure, homodimer.

It functions in the pathway secondary metabolite biosynthesis; terpenoid biosynthesis. Its function is as follows. Part of the gene cluster B that mediates the biosynthesis of the fungal meroterpenoid acetoxydehydroaustin. The first step of the pathway is the synthesis of 3,5-dimethylorsellinic acid by the polyketide synthase ausA. 3,5-dimethylorsellinic acid is then prenylated by the polyprenyl transferase ausN. Further epoxidation by the FAD-dependent monooxygenase ausM and cyclization by the probable terpene cyclase ausL lead to the formation of protoaustinoid A. Protoaustinoid A is then oxidized to spiro-lactone preaustinoid A3 by the combined action of the FAD-binding monooxygenases ausB and ausC, and the dioxygenase ausE. Acid-catalyzed keto-rearrangement and ring contraction of the tetraketide portion of preaustinoid A3 by ausJ lead to the formation of preaustinoid A4. The aldo-keto reductase ausK, with the help of ausH, is involved in the next step by transforming preaustinoid A4 into isoaustinone which is in turn hydroxylated by the P450 monooxygenase ausI to form austinolide. The cytochrome P450 monooxygenase ausG then modifies austinolide to austinol. Austinol is further acetylated to austin by the O-acetyltransferase ausP, which spontaneously changes to dehydroaustin. The cytochrome P450 monooxygenase then converts dehydroaustin is into 7-dehydrodehydroaustin. The hydroxylation catalyzed by ausR permits the second O-acetyltransferase ausQ to add an additional acetyl group to the molecule, leading to the formation of acetoxydehydroaustin. Due to genetic rearrangements of the clusters and the subsequent loss of some enzymes, the end product of the Penicillium brasilianum austinoid biosynthesis clusters is acetoxydehydroaustin. The polypeptide is Austinoid biosynthesis clusters protein F (Penicillium brasilianum).